A 374-amino-acid polypeptide reads, in one-letter code: Guanine nucleotide-binding protein subunit alpha-15 (374 aa).

Residues 41–374 (GELKLLLLGP…ARYLDEINLL (334 aa)) enclose the G-alpha domain. The tract at residues 44-57 (KLLLLGPGESGKST) is G1 motif. Residues 49-56 (GPGESGKS), 183-189 (LRSRMPT), 208-212 (DVGGQ), 277-280 (NKTD), and Ala-346 each bind GTP. Residue Ser-56 participates in Mg(2+) binding. The segment at 181–189 (DVLRSRMPT) is G2 motif. The residue at position 186 (Arg-186) is an ADP-ribosylarginine; by cholera toxin. Thr-189 contacts Mg(2+). Positions 204-213 (LRIVDVGGQK) are G3 motif. Positions 273–280 (ILFLNKTD) are G4 motif. The tract at residues 344–349 (TCATDT) is G5 motif.

Belongs to the G-alpha family. G(q) subfamily. As to quaternary structure, g proteins are composed of 3 units; alpha, beta and gamma. The alpha chain contains the guanine nucleotide binding site. Specifically expressed in hematopoietic cells. Expressed in epididymis (at protein level).

Functionally, guanine nucleotide-binding proteins (G proteins) are involved as modulators or transducers in various transmembrane signaling systems. This is Guanine nucleotide-binding protein subunit alpha-15 (GNA15) from Homo sapiens (Human).